Here is a 332-residue protein sequence, read N- to C-terminus: Transaldolase (332 aa).

Catalysis depends on K136, which acts as the Schiff-base intermediate with substrate.

This sequence belongs to the transaldolase family. Type 1 subfamily.

The protein localises to the cytoplasm. The catalysed reaction is D-sedoheptulose 7-phosphate + D-glyceraldehyde 3-phosphate = D-erythrose 4-phosphate + beta-D-fructose 6-phosphate. Its pathway is carbohydrate degradation; pentose phosphate pathway; D-glyceraldehyde 3-phosphate and beta-D-fructose 6-phosphate from D-ribose 5-phosphate and D-xylulose 5-phosphate (non-oxidative stage): step 2/3. Transaldolase is important for the balance of metabolites in the pentose-phosphate pathway. This Trichormus variabilis (strain ATCC 29413 / PCC 7937) (Anabaena variabilis) protein is Transaldolase.